Reading from the N-terminus, the 140-residue chain is Large ribosomal subunit protein uL15 (140 aa).

The segment at 1 to 31 (MDTKKFRGSRTCGGGTHKNRRGAGNRGGRGK) is disordered.

Belongs to the universal ribosomal protein uL15 family. As to quaternary structure, part of the 50S ribosomal subunit.

Functionally, binds to the 23S rRNA. The polypeptide is Large ribosomal subunit protein uL15 (Methanosarcina barkeri (strain Fusaro / DSM 804)).